The following is a 375-amino-acid chain: tRNA-specific 2-thiouridylase MnmA (375 aa).

Residues 16–23 (GMSGGVDS) and Met42 each bind ATP. The interaction with target base in tRNA stretch occupies residues 102-104 (NPD). The active-site Nucleophile is Cys107. Cys107 and Cys203 are disulfide-bonded. Residue Gly131 coordinates ATP. The interaction with tRNA stretch occupies residues 153-155 (KDQ). Cys203 (cysteine persulfide intermediate) is an active-site residue. Residues 315-316 (RY) form an interaction with tRNA region.

Belongs to the MnmA/TRMU family.

It localises to the cytoplasm. It catalyses the reaction S-sulfanyl-L-cysteinyl-[protein] + uridine(34) in tRNA + AH2 + ATP = 2-thiouridine(34) in tRNA + L-cysteinyl-[protein] + A + AMP + diphosphate + H(+). Catalyzes the 2-thiolation of uridine at the wobble position (U34) of tRNA, leading to the formation of s(2)U34. This is tRNA-specific 2-thiouridylase MnmA from Pseudomonas paraeruginosa (strain DSM 24068 / PA7) (Pseudomonas aeruginosa (strain PA7)).